The sequence spans 824 residues: Type IV secretion system protein PtlC homolog (824 aa).

456–463 (GQSGSGKT) contributes to the ATP binding site.

This sequence belongs to the TrbE/VirB4 family.

The protein localises to the cell membrane. The sequence is that of Type IV secretion system protein PtlC homolog (ptlC) from Bordetella bronchiseptica (strain ATCC BAA-588 / NCTC 13252 / RB50) (Alcaligenes bronchisepticus).